A 382-amino-acid polypeptide reads, in one-letter code: MPQCECPEPLSAVQLKRLEEHKYSAAGRSLFEPPCQIYWNWLVQQIPTWVAPNTLTTIGLVINVITTVILVYYSPTATEEVPGWAFFLSALGLFIYQSLDAIDGKQARRTNSSSALGELFDHGCDAVSTVFVAVGTCICCGIGAYPNWMFFCGFVGMFMFFCAHWQTYVSGTLRFGLVDVTEVQIAIIIMYLLTAFTGVSFWEMRVPVLGVNLQTFPILGIIGGFLYSTYNYFFVIMNGGVGKNGSTVADTSVLTPGLHIGLILTLAFIIFKKSSSHLFEHHPCLYVLTFGMVIAKISNKLVVAHMTKSELHLQDTAFIGPGLLFLNQYFNSYIDEHIVLWIAMVLSLVDLVRYCTAVCLQIASHLRIRVFSISPQGHAHKD.

The Cytoplasmic portion of the chain corresponds to M1–A51. The chain crosses the membrane as a helical span at residues P52–Y72. Residue N53 coordinates CDP-choline. The Lumenal portion of the chain corresponds to Y73–P82. The chain crosses the membrane as a helical span at residues G83–A107. Residues D100 and D103 each coordinate Mg(2+). R108 lines the CDP-choline pocket. Over R108–S114 the chain is Cytoplasmic. Residues A115–C139 form a helical membrane-spanning segment. D121 provides a ligand contact to Mg(2+). The Proton acceptor role is filled by H122. Residue D125 participates in Mg(2+) binding. Residues C140–M149 lie on the Lumenal side of the membrane. The chain crosses the membrane as a helical span at residues F150 to Y168. Residues V169–D179 lie on the Cytoplasmic side of the membrane. A helical membrane pass occupies residues V180 to F196. The Lumenal segment spans residues T197–V211. A helical transmembrane segment spans residues N212–M237. At N238–L254 the chain is on the cytoplasmic side. The helical transmembrane segment at T255 to I270 threads the bilayer. Over F271–H282 the chain is Lumenal. The chain crosses the membrane as a helical span at residues P283–H305. The Cytoplasmic portion of the chain corresponds to M306–F318. Residues I319–Q328 traverse the membrane as a helical segment. Topologically, residues Y329–D335 are lumenal. The chain crosses the membrane as a helical span at residues E336–H365. Residues L366–D382 lie on the Cytoplasmic side of the membrane.

The protein belongs to the CDP-alcohol phosphatidyltransferase class-I family. It depends on Mg(2+) as a cofactor. Mn(2+) serves as cofactor.

The protein resides in the golgi apparatus membrane. The catalysed reaction is CDP-choline + a 1,2-diacyl-sn-glycerol = a 1,2-diacyl-sn-glycero-3-phosphocholine + CMP + H(+). The enzyme catalyses 1-octadecanoyl-2-(5Z,8Z,11Z,14Z-eicosatetraenoyl)-sn-glycerol + CDP-choline = 1-octadecanoyl-2-(5Z,8Z,11Z,14Z-eicosatetraenoyl)-sn-glycero-3-phosphocholine + CMP + H(+). It catalyses the reaction 1-hexadecanoyl-2-(9Z-octadecenoyl)-sn-glycerol + CDP-choline = 1-hexadecanoyl-2-(9Z-octadecenoyl)-sn-glycero-3-phosphocholine + CMP + H(+). It carries out the reaction 1-hexadecanoyl-2-(4Z,7Z,10Z,13Z,16Z,19Z-docosahexaenoyl)-sn-glycerol + CDP-choline = 1-hexadecanoyl-2-(4Z,7Z,10Z,13Z,16Z,19Z-docosahexaenoyl)-sn-glycero-3-phosphocholine + CMP + H(+). The catalysed reaction is 1,2-dioctanoyl-sn-glycerol + CDP-choline = 1,2-dioctanoyl-sn-glycero-3-phosphocholine + CMP + H(+). Its pathway is phospholipid metabolism; phosphatidylcholine biosynthesis; phosphatidylcholine from phosphocholine: step 2/2. Catalyzes the final step of de novo phosphatidylcholine (PC) synthesis, i.e. the transfer of choline phosphate from CDP-choline to the free hydroxyl of a diacylglycerol (DAG), producing a PC. It thereby plays a central role in the formation and maintenance of vesicular membranes. This chain is Cholinephosphotransferase 1 (chpt1), found in Danio rerio (Zebrafish).